The chain runs to 457 residues: Multidrug resistance protein MdtK (457 aa).

The next 12 helical transmembrane spans lie at 11–31 (LLAL…MGFV), 53–73 (IWLP…PVIA), 93–113 (WLAS…GYII), 127–147 (AVGY…FQVA), 160–180 (GMVM…IFIY), 188–208 (LGGI…FIAM), 243–263 (LPIA…ALLV), 276–296 (IALN…AAVT), 314–334 (AART…IFTV), 357–377 (LMLL…GSGI), 387–407 (IFFI…YILA), and 418–438 (PAGF…LMML).

This sequence belongs to the multi antimicrobial extrusion (MATE) (TC 2.A.66.1) family. MdtK subfamily.

The protein resides in the cell inner membrane. Its function is as follows. Multidrug efflux pump that functions probably as a Na(+)/drug antiporter. In Salmonella arizonae (strain ATCC BAA-731 / CDC346-86 / RSK2980), this protein is Multidrug resistance protein MdtK.